A 609-amino-acid polypeptide reads, in one-letter code: Proteasome-associated ATPase (609 aa).

A disordered region spans residues 1-27 (MGSSERSEAFGTPRESDMSSGDEAELE). Positions 17–96 (DMSSGDEAEL…LREEVDRLGQ (80 aa)) form a coiled coil. 296–301 (GCGKTL) is a binding site for ATP. Residues 608 to 609 (YL) are docks into pockets in the proteasome alpha-ring.

Belongs to the AAA ATPase family. As to quaternary structure, homohexamer. Assembles into a hexameric ring structure that caps the 20S proteasome core. Strongly interacts with the prokaryotic ubiquitin-like protein Pup through a hydrophobic interface; the interacting region of ARC lies in its N-terminal coiled-coil domain. There is one Pup binding site per ARC hexamer ring. Upon ATP-binding, the C-terminus of ARC interacts with the alpha-rings of the proteasome core, possibly by binding to the intersubunit pockets.

The protein operates within protein degradation; proteasomal Pup-dependent pathway. In terms of biological role, ATPase which is responsible for recognizing, binding, unfolding and translocation of pupylated proteins into the bacterial 20S proteasome core particle. May be essential for opening the gate of the 20S proteasome via an interaction with its C-terminus, thereby allowing substrate entry and access to the site of proteolysis. Thus, the C-termini of the proteasomal ATPase may function like a 'key in a lock' to induce gate opening and therefore regulate proteolysis. The chain is Proteasome-associated ATPase from Mycobacterium avium (strain 104).